A 161-amino-acid chain; its full sequence is SsrA-binding protein (161 aa).

Belongs to the SmpB family.

Its subcellular location is the cytoplasm. Its function is as follows. Required for rescue of stalled ribosomes mediated by trans-translation. Binds to transfer-messenger RNA (tmRNA), required for stable association of tmRNA with ribosomes. tmRNA and SmpB together mimic tRNA shape, replacing the anticodon stem-loop with SmpB. tmRNA is encoded by the ssrA gene; the 2 termini fold to resemble tRNA(Ala) and it encodes a 'tag peptide', a short internal open reading frame. During trans-translation Ala-aminoacylated tmRNA acts like a tRNA, entering the A-site of stalled ribosomes, displacing the stalled mRNA. The ribosome then switches to translate the ORF on the tmRNA; the nascent peptide is terminated with the 'tag peptide' encoded by the tmRNA and targeted for degradation. The ribosome is freed to recommence translation, which seems to be the essential function of trans-translation. This chain is SsrA-binding protein, found in Vibrio vulnificus (strain YJ016).